The following is a 437-amino-acid chain: tRNA(Ile2) 2-agmatinylcytidine synthetase TiaS (437 aa).

It belongs to the TiaS family.

The protein resides in the cytoplasm. It carries out the reaction cytidine(34) in tRNA(Ile2) + agmatine + ATP + H2O = 2-agmatinylcytidine(34) in tRNA(Ile2) + AMP + 2 phosphate + 2 H(+). Its function is as follows. ATP-dependent agmatine transferase that catalyzes the formation of 2-agmatinylcytidine (agm2C) at the wobble position (C34) of tRNA(Ile2), converting the codon specificity from AUG to AUA. The polypeptide is tRNA(Ile2) 2-agmatinylcytidine synthetase TiaS (Acidilobus saccharovorans (strain DSM 16705 / JCM 18335 / VKM B-2471 / 345-15)).